Reading from the N-terminus, the 173-residue chain is CASP-like protein 3A1 (173 aa).

Residue Met-1 is a topological domain, cytoplasmic. A helical membrane pass occupies residues 2 to 22 (VDIALRSAVVAFMVVSLSAMF). The Extracellular segment spans residues 23-48 (TSTQHSEVHIIGFSIPVSLRWNRSQP). N-linked (GlcNAc...) asparagine glycosylation is present at Asn-44. A helical transmembrane segment spans residues 49–69 (FEFLVVVELLICAYAFVQFVY). The Cytoplasmic segment spans residues 70 to 84 (QSVVLAKNAVPTRRC). A helical transmembrane segment spans residues 85–105 (IWVQLAADQVCAYLVLAAAAA). The Extracellular segment spans residues 106–140 (AAGASRTNKSGFQSLGMQNIKVPGVCIVLDKFCNR). Asn-113 carries N-linked (GlcNAc...) asparagine glycosylation. The chain crosses the membrane as a helical span at residues 141 to 161 (ATIAIIFTLLAAGASGISVTL). Residues 162–173 (DVYMLTLTYYMG) lie on the Cytoplasmic side of the membrane.

It belongs to the Casparian strip membrane proteins (CASP) family. In terms of assembly, homodimer and heterodimers.

It is found in the cell membrane. In Pteridium aquilinum subsp. aquilinum (Bracken fern), this protein is CASP-like protein 3A1.